The following is a 376-amino-acid chain: Flagellar P-ring protein (376 aa).

An N-terminal signal peptide occupies residues 1-29; it reads MTQRPFSLLSHLGRICLAAAMLAALPAQA.

Belongs to the FlgI family. The basal body constitutes a major portion of the flagellar organelle and consists of four rings (L,P,S, and M) mounted on a central rod.

The protein localises to the periplasm. It is found in the bacterial flagellum basal body. In terms of biological role, assembles around the rod to form the L-ring and probably protects the motor/basal body from shearing forces during rotation. The sequence is that of Flagellar P-ring protein from Bordetella avium (strain 197N).